We begin with the raw amino-acid sequence, 287 residues long: Tetraspanning orphan receptor (287 aa).

Residues 1–27 are Extracellular-facing; sequence MSPSLVSDTQKHERGSHGVKIKHFSPY. Residues 28-48 traverse the membrane as a helical segment; that stretch reads IAVCVTTFSLAFCCFMVHGAI. The Cytoplasmic segment spans residues 49-55; the sequence is TRQPTHL. Residues 56 to 76 form a helical membrane-spanning segment; it reads LPFFFIQVFDLIICLIHILGF. The Extracellular portion of the chain corresponds to 77–91; that stretch reads MSSTSDIRLVIHTKT. The helical transmembrane segment at 92 to 114 threads the bilayer; that stretch reads GPIYIKSTGLTFIILSISRMMLA. Over 115–287 the chain is Cytoplasmic; it reads FKAYCLGMVW…NASSNAHSSC (173 aa). A disordered region spans residues 165–190; that stretch reads NNSIGNSGSPNEPNTRPRPDTITYDP.

Interacts (via N-terminal extracellular domain) with human C2a.

The protein resides in the cell membrane. In terms of biological role, cell surface receptor that binds to human complement C2a protein. This results in inhibition of the classical and lectin pathways of complement activation, probably due to interference with binding of C2a to C4b and interference with cleavage by C1 or MASP2 such that C3 convertase cannot be formed. This infers resistance to complement-mediated cell lysis, allowing parasite survival and infection. The protein is Tetraspanning orphan receptor of Trypanosoma cruzi.